A 440-amino-acid polypeptide reads, in one-letter code: Xylose isomerase (440 aa).

Residues His-99 and Asp-102 contribute to the active site. Residues Glu-230, Glu-266, His-269, Asp-294, Asp-305, Asp-307, and Asp-337 each contribute to the Mg(2+) site.

This sequence belongs to the xylose isomerase family. As to quaternary structure, homotetramer. The cofactor is Mg(2+).

Its subcellular location is the cytoplasm. It catalyses the reaction alpha-D-xylose = alpha-D-xylulofuranose. The chain is Xylose isomerase from Halalkalibacterium halodurans (strain ATCC BAA-125 / DSM 18197 / FERM 7344 / JCM 9153 / C-125) (Bacillus halodurans).